The chain runs to 1207 residues: MIDVNNFHYMKIGLASPEKIRSWSYGEVKKPETINYRTLKPEKDGLFCERIFGPTKDWECSCGKYKRVRYKGMVCDRCGVEVTKSKVRRERMGHIELAAPVSHIWYFKGIPSRMGLLLDMSPRALEEVIYFASYVVVDPGPTGLEKKTLLSEAEFREYYDKYPNQFVAKMGAEGIKDLLEEIDLDEELKELRDELESATGQRLTRAIKRLEVVESFRNSGNNPSWMILDVLPIIPPEIRPMVQLDGGRFATSDLNDLYRRVINRNNRLKRLLDLGAPGIIVQNEKRMLQEAVDALIDNGRRGRPVTGPGNRPLKSLSHMLKGKQGRFRQNLLGKRVDYSGRSVIAVGPSLKMYQCGLPKEMALELFKPFVMKELVQREIATNIKNAKSKIERMDDEVWDVLEDVITEHPVLLNRAPTLHRLGIQAFEPTLVEGRAIRLHPLVTTAYNADFDGDQMAVHVPLSKEAQAEARMLMLAAQNILNPKDGKPVVTPSQDMVLGNYYLTLERKDAVNTGAIFNDTNEVLKAYANGYVHLHTRIGVHANSFNNPTFTDEQNSKILATSVGKIIFNEIIPDSFAYINEPSQANLERTTPDKYFVDPTQLGEGGLKEYFDNTELIEPFNKKFLGNIIAEVFNRFSITDTSMMLDRMKDLGFKFSSKAGITVGVSDIVVLPDKQDILDEHEKLVERVTKQYNRGLITEDERYNAVVEIWTDAKDQIQGELMQSLEKTNPIFMMSDSGARGNASNFTQLAGMRGLMAAPSGKIIELPITSSFREGLTVLEYFISTHGARKGLADTALKTADSGYLTRRLVDVAQDVIVREEDCGTDRGLLVSDIKEGTEMIEPFIERIEGRYSKETIRHPETDEVIIRPDELITPDIAKQITDAGIEQMYIRSAFTCNTRHGVCEKCYGKNLATGEKVEVGEAVGTIAAQSIGEPGTQLTMRTFHTGGVAGSDITQGLPRIQEIFEARNPKGQAVITEIEGVVDDIKLAKDRQQEIIVKGANETRSYLASGTSRLKVEIGQSVERGEVLTEGSIEPKNYLSVAGLNATESYLLKEVQKVYRMQGVEIDDKHVEVMVRQMLRKVRIIEAGDTKLLPGSLVDIHNFTDANRDAFKHRKRPATAKPVLLGITKASLETESFLSAASFQETTRVLTDAAIKGKRDDLLGLKENVIIGKLIPAGTGMRRYSDIQYDKATAPVTETSEEVETIE.

The Zn(2+) site is built by Cys-60, Cys-62, Cys-75, and Cys-78. 3 residues coordinate Mg(2+): Asp-449, Asp-451, and Asp-453. Zn(2+) contacts are provided by Cys-822, Cys-896, Cys-903, and Cys-906.

Belongs to the RNA polymerase beta' chain family. The RNAP catalytic core consists of 2 alpha, 1 beta, 1 beta' and 1 omega subunit. When a sigma factor is associated with the core the holoenzyme is formed, which can initiate transcription. It depends on Mg(2+) as a cofactor. Requires Zn(2+) as cofactor.

The enzyme catalyses RNA(n) + a ribonucleoside 5'-triphosphate = RNA(n+1) + diphosphate. DNA-dependent RNA polymerase catalyzes the transcription of DNA into RNA using the four ribonucleoside triphosphates as substrates. This Staphylococcus epidermidis (strain ATCC 35984 / DSM 28319 / BCRC 17069 / CCUG 31568 / BM 3577 / RP62A) protein is DNA-directed RNA polymerase subunit beta'.